Here is a 496-residue protein sequence, read N- to C-terminus: Probable cytosol aminopeptidase (496 aa).

Residues Lys-266 and Asp-271 each contribute to the Mn(2+) site. Lys-278 is a catalytic residue. The Mn(2+) site is built by Asp-289, Asp-348, and Glu-350. Residue Arg-352 is part of the active site.

Belongs to the peptidase M17 family. The cofactor is Mn(2+).

The protein localises to the cytoplasm. The enzyme catalyses Release of an N-terminal amino acid, Xaa-|-Yaa-, in which Xaa is preferably Leu, but may be other amino acids including Pro although not Arg or Lys, and Yaa may be Pro. Amino acid amides and methyl esters are also readily hydrolyzed, but rates on arylamides are exceedingly low.. It carries out the reaction Release of an N-terminal amino acid, preferentially leucine, but not glutamic or aspartic acids.. Presumably involved in the processing and regular turnover of intracellular proteins. Catalyzes the removal of unsubstituted N-terminal amino acids from various peptides. This chain is Probable cytosol aminopeptidase, found in Pseudomonas syringae pv. tomato (strain ATCC BAA-871 / DC3000).